The following is a 430-amino-acid chain: KIN17-like protein (430 aa).

The C2H2-type zinc-finger motif lies at 28 to 50 (CQMCQKQCRDENGFKCHCMSESH). Residues 51 to 160 (QRQMQVFGQA…KARLKRKRIK (110 aa)) are winged helix-turn-helix (wHTH). Positions 147-183 (EQAVKARLKRKRIKSDLAEDERQERMIARQIERAQQS) form a coiled coil. A Nuclear localization signal (NLS) motif is present at residues 155–158 (KRKR). Disordered regions lie at residues 179-230 (RAQQ…ANKA) and 261-284 (EEED…GKDA). Over residues 209–224 (EYSDSENDHEGQEEDA) the composition is skewed to acidic residues. The span at 261–278 (EEEDEVSARDKEKEELAK) shows a compositional bias: basic and acidic residues. Residues 283–312 (DAINAAEARRSALDELMKEEEKAKERSNRK) are a coiled coil. A C-terminal subdomain A region spans residues 319 to 370 (GIVVKVMSKSLAEKGYCKQKGVVKRVIDKYVGEIEMLESKHVLRVDQDELET). The interval 376-427 (GGLVRIVNGAYRGSNARLLSVDTERFCAKVQVEKGLYDGKVLKAIEYEDICK) is C-terminal subdomain B.

The protein belongs to the KIN17 family.

The protein localises to the nucleus. This chain is KIN17-like protein, found in Oryza sativa subsp. indica (Rice).